The following is a 254-amino-acid chain: Triosephosphate isomerase (254 aa).

12–14 (NWK) contacts substrate. Histidine 99 acts as the Electrophile in catalysis. Glutamate 169 (proton acceptor) is an active-site residue. Residues glycine 175, serine 214, and 235-236 (GG) each bind substrate.

The protein belongs to the triosephosphate isomerase family. As to quaternary structure, homodimer.

Its subcellular location is the cytoplasm. It carries out the reaction D-glyceraldehyde 3-phosphate = dihydroxyacetone phosphate. The protein operates within carbohydrate biosynthesis; gluconeogenesis. It participates in carbohydrate degradation; glycolysis; D-glyceraldehyde 3-phosphate from glycerone phosphate: step 1/1. Involved in the gluconeogenesis. Catalyzes stereospecifically the conversion of dihydroxyacetone phosphate (DHAP) to D-glyceraldehyde-3-phosphate (G3P). This chain is Triosephosphate isomerase, found in Brucella melitensis biotype 1 (strain ATCC 23456 / CCUG 17765 / NCTC 10094 / 16M).